Reading from the N-terminus, the 1384-residue chain is DNA-directed RNA polymerase subunit beta (1384 aa).

The protein belongs to the RNA polymerase beta chain family. As to quaternary structure, the RNAP catalytic core consists of 2 alpha, 1 beta, 1 beta' and 1 omega subunit. When a sigma factor is associated with the core the holoenzyme is formed, which can initiate transcription.

It carries out the reaction RNA(n) + a ribonucleoside 5'-triphosphate = RNA(n+1) + diphosphate. DNA-dependent RNA polymerase catalyzes the transcription of DNA into RNA using the four ribonucleoside triphosphates as substrates. This Xylella fastidiosa (strain M12) protein is DNA-directed RNA polymerase subunit beta.